The chain runs to 259 residues: uncharacterized protein (259 aa).

It belongs to the BtpA family.

This is an uncharacterized protein from Pyrococcus abyssi (strain GE5 / Orsay).